A 277-amino-acid chain; its full sequence is Shikimate dehydrogenase (NADP(+)) (277 aa).

Shikimate-binding positions include 15–17 (SLS) and threonine 62. Lysine 66 (proton acceptor) is an active-site residue. Shikimate is bound by residues asparagine 87 and aspartate 102. NADP(+) is bound by residues 127–131 (GAGGA), 151–156 (NRTVDK), and isoleucine 219. Tyrosine 221 is a binding site for shikimate. Glycine 242 provides a ligand contact to NADP(+).

Belongs to the shikimate dehydrogenase family. In terms of assembly, homodimer.

The enzyme catalyses shikimate + NADP(+) = 3-dehydroshikimate + NADPH + H(+). It functions in the pathway metabolic intermediate biosynthesis; chorismate biosynthesis; chorismate from D-erythrose 4-phosphate and phosphoenolpyruvate: step 4/7. Functionally, involved in the biosynthesis of the chorismate, which leads to the biosynthesis of aromatic amino acids. Catalyzes the reversible NADPH linked reduction of 3-dehydroshikimate (DHSA) to yield shikimate (SA). The sequence is that of Shikimate dehydrogenase (NADP(+)) from Bacillus cereus (strain 03BB102).